Reading from the N-terminus, the 122-residue chain is Small ribosomal subunit protein uS13 (122 aa).

The segment at 99–122 (RGQRTHTNARTRKGPAKAIAGKKK) is disordered.

It belongs to the universal ribosomal protein uS13 family. Part of the 30S ribosomal subunit. Forms a loose heterodimer with protein S19. Forms two bridges to the 50S subunit in the 70S ribosome.

Its function is as follows. Located at the top of the head of the 30S subunit, it contacts several helices of the 16S rRNA. In the 70S ribosome it contacts the 23S rRNA (bridge B1a) and protein L5 of the 50S subunit (bridge B1b), connecting the 2 subunits; these bridges are implicated in subunit movement. Contacts the tRNAs in the A and P-sites. The polypeptide is Small ribosomal subunit protein uS13 (Sinorhizobium fredii (strain NBRC 101917 / NGR234)).